The chain runs to 249 residues: MGQKIHPYGLRLGITSEWRSRWYADKQYADYLAEDIKIRDFLSKGLERAGIADVVIERTRDRVRVDIHTARPGIVIGRRGAEADRIRGKLEKLTGKQVQLNILEVKNVDASAQLVAQSIAEQLSNRVAFRRAMRKAIQGAMRQPQVKGIKVVCSGRLGGAEMGRTERYHEGRVPLHTLRAEIDYGTFEAHTTFGRIGVKVWIYKGDVVGGRRESLINARDDRGSRRGRNDRPRRGGGRRRRAAEQKQEG.

The 69-residue stretch at 38-106 (IRDFLSKGLE…QVQLNILEVK (69 aa)) folds into the KH type-2 domain. Positions 218 to 233 (ARDDRGSRRGRNDRPR) are enriched in basic and acidic residues. The disordered stretch occupies residues 218-249 (ARDDRGSRRGRNDRPRRGGGRRRRAAEQKQEG).

The protein belongs to the universal ribosomal protein uS3 family. As to quaternary structure, part of the 30S ribosomal subunit. Forms a tight complex with proteins S10 and S14.

Its function is as follows. Binds the lower part of the 30S subunit head. Binds mRNA in the 70S ribosome, positioning it for translation. In Corynebacterium kroppenstedtii (strain DSM 44385 / JCM 11950 / CIP 105744 / CCUG 35717), this protein is Small ribosomal subunit protein uS3.